Consider the following 347-residue polypeptide: 4-hydroxythreonine-4-phosphate dehydrogenase (347 aa).

Histidine 137 and threonine 138 together coordinate substrate. A divalent metal cation-binding residues include histidine 174, histidine 219, and histidine 274. Residues lysine 282, asparagine 291, and arginine 300 each contribute to the substrate site.

Belongs to the PdxA family. In terms of assembly, homodimer. It depends on Zn(2+) as a cofactor. Requires Mg(2+) as cofactor. Co(2+) serves as cofactor.

Its subcellular location is the cytoplasm. The enzyme catalyses 4-(phosphooxy)-L-threonine + NAD(+) = 3-amino-2-oxopropyl phosphate + CO2 + NADH. The protein operates within cofactor biosynthesis; pyridoxine 5'-phosphate biosynthesis; pyridoxine 5'-phosphate from D-erythrose 4-phosphate: step 4/5. Functionally, catalyzes the NAD(P)-dependent oxidation of 4-(phosphooxy)-L-threonine (HTP) into 2-amino-3-oxo-4-(phosphooxy)butyric acid which spontaneously decarboxylates to form 3-amino-2-oxopropyl phosphate (AHAP). The chain is 4-hydroxythreonine-4-phosphate dehydrogenase from Cupriavidus pinatubonensis (strain JMP 134 / LMG 1197) (Cupriavidus necator (strain JMP 134)).